We begin with the raw amino-acid sequence, 227 residues long: MSDELKHIAIVMDGNGRWAKKRGLPRSMGHKEGLNTVKRITKAVSDLGIPYITLYIFSTENWKRTEAEVGFLMGLIKQHLKAELKFYADNNIRIEHIGNLSGLPQDIQDEINSVRDKTSAYTGTAIVLGINYGAHDEILRAIKKLNSDELASINEESFSLKLDTGKIPPVDLLIRTGGEKRLSNFLLWQSAYAELYFTDTLWPDWTVENLYEAIEDYKKRNRRYGNA.

Asp-13 is an active-site residue. A Mg(2+)-binding site is contributed by Asp-13. Substrate is bound by residues 14–17 (GNGR), Trp-18, Arg-26, His-30, and 58–60 (STE). Residue Asn-61 is the Proton acceptor of the active site. Residues Trp-62, Arg-64, Arg-175, and 181–183 (RLS) each bind substrate. Mg(2+) is bound at residue Glu-194.

The protein belongs to the UPP synthase family. As to quaternary structure, homodimer. Mg(2+) is required as a cofactor.

Its function is as follows. Catalyzes the condensation of isopentenyl diphosphate (IPP) with allylic pyrophosphates generating different type of terpenoids. The chain is Isoprenyl transferase from Treponema denticola (strain ATCC 35405 / DSM 14222 / CIP 103919 / JCM 8153 / KCTC 15104).